Reading from the N-terminus, the 400-residue chain is Protein screw (400 aa).

Residues 1–16 form the signal peptide; the sequence is MLNVFFLTSLFYAASA. The propeptide occupies 17–277; the sequence is TTYVTTNNHI…RFKRDLEKRR (261 aa). 5 N-linked (GlcNAc...) asparagine glycosylation sites follow: N165, N189, N201, N304, and N342. 3 disulfides stabilise this stretch: C300-C365, C329-C397, and C333-C399.

The protein belongs to the TGF-beta family. Heterodimers of scw/dpp are the active subunit, dpp/dpp homodimers elicit a basal response and scw/scw homodimers alone are ineffective in specifying a dorsal pattern. In terms of tissue distribution, ubiquitously expressed during early stages of embryogenesis, but the effect on development appears graded and is restricted to the dorsal side of the embryo.

The protein localises to the secreted. Its function is as follows. Part of the signal that specifies dorsal cell fates in the embryo. Acts together with dpp. The sequence is that of Protein screw (scw) from Drosophila melanogaster (Fruit fly).